A 114-amino-acid polypeptide reads, in one-letter code: Beta-microseminoprotein (114 aa).

The signal sequence occupies residues 1-20 (MNVLLGGFVIFATFVTLCNA). 5 disulfides stabilise this stretch: C22-C70, C38-C62, C57-C93, C60-C69, and C84-C107.

It belongs to the beta-microseminoprotein family. In terms of assembly, homodimer; Interacts with PI16.

It localises to the secreted. The protein is Beta-microseminoprotein (MSMB) of Papio anubis (Olive baboon).